The sequence spans 807 residues: Glycerol-3-phosphate acyltransferase (807 aa).

Positions 308-313 match the HXXXXD motif motif; it reads CHRSHM.

It belongs to the GPAT/DAPAT family.

Its subcellular location is the cell inner membrane. It catalyses the reaction sn-glycerol 3-phosphate + an acyl-CoA = a 1-acyl-sn-glycero-3-phosphate + CoA. The protein operates within phospholipid metabolism; CDP-diacylglycerol biosynthesis; CDP-diacylglycerol from sn-glycerol 3-phosphate: step 1/3. The chain is Glycerol-3-phosphate acyltransferase from Shewanella putrefaciens (strain CN-32 / ATCC BAA-453).